Here is a 1377-residue protein sequence, read N- to C-terminus: Dicer-like protein 2 (1377 aa).

In terms of domain architecture, Helicase ATP-binding spans 23-203 (MFEASLQENI…LSMIESNMNA (181 aa)). 36 to 43 (MDTGSGKT) contacts ATP. The DEAH box signature appears at 144–147 (DEAH). Residues 367–544 (KLEALISFLS…ALALETMAEV (178 aa)) form the Helicase C-terminal domain. The Dicer dsRNA-binding fold domain occupies 563 to 657 (AVARLHHFCS…LPLTRKPELR (95 aa)). RNase III domains lie at 916–1056 (ATRL…MDGG) and 1090–1274 (NDSL…VDSR). Residues E1129, D1260, and E1263 each coordinate Mg(2+).

The protein belongs to the helicase family. Dicer subfamily. Requires Mg(2+) as cofactor. Mn(2+) serves as cofactor.

Functionally, dicer-like endonuclease involved in cleaving double-stranded RNA in the RNA interference (RNAi) pathway. Produces 21 to 25 bp dsRNAs (siRNAs) which target the selective destruction of homologous RNAs leading to sequence-specific suppression of gene expression, called post-transcriptional gene silencing (PTGS). Part of a broad host defense response against viral infection and transposons. The chain is Dicer-like protein 2 (dcl2) from Aspergillus terreus (strain NIH 2624 / FGSC A1156).